Here is a 919-residue protein sequence, read N- to C-terminus: PAX3- and PAX7-binding protein 1 (919 aa).

Over residues 1–11 (MFRKARRVNVR) the composition is skewed to basic residues. Disordered stretches follow at residues 1–120 (MFRK…ENEE), 151–206 (KTEL…GGAF), and 237–277 (AREL…RIVF). A Phosphoserine modification is found at serine 16. The span at 16–28 (SEEEERERDEEQE) shows a compositional bias: acidic residues. A compositionally biased stretch (low complexity) spans 49–59 (RAPAGESLLGP). Over residues 75–87 (AEAGGGISGGAEP) the composition is skewed to gly residues. Lysine 151 participates in a covalent cross-link: Glycyl lysine isopeptide (Lys-Gly) (interchain with G-Cter in SUMO1); alternate. Residue lysine 151 forms a Glycyl lysine isopeptide (Lys-Gly) (interchain with G-Cter in SUMO2); alternate linkage. Serine 160 carries the post-translational modification Phosphoserine. Residues 163-174 (PLDKTCHAKDTN) show a composition bias toward basic and acidic residues. The segment covering 185-195 (GEDEMDMESEK) has biased composition (acidic residues). Serine 193 carries the post-translational modification Phosphoserine. Basic and acidic residues predominate over residues 237–258 (ARELGDFTPHDSEPGKGRLVRE). The segment covering 259-270 (DENDASDDEDDD) has biased composition (acidic residues). A phosphoserine mark is found at serine 264, serine 297, serine 559, and serine 560. Residues 380 to 560 (TPSNEMAPVT…MADHLEGLSS (181 aa)) are necessary and sufficient for interaction with PAX7. The interval 533–566 (EREARRTRRRQAREQTGQMADHLEGLSSDDEETS) is disordered. Threonine 565 is subject to Phosphothreonine.

The protein belongs to the GCF family. As to quaternary structure, interacts with PAX3 and PAX7. Interacts with WDR5; associates with a histone methyltransferase (HMT) complex composed at least of RBBP5, ASH2L, SET1, SET2 and KMT2A/MLL1, KMT2D/MLL2, KMT2C/MLL3 and KMT2B/MLL4 through direct interaction with WDR5. Ubiquitously expressed in all tissues tested including skeletal muscle. Expressed in primary myoblasts.

The protein resides in the nucleus. In terms of biological role, adapter protein linking the transcription factors PAX3 and PAX7 to the histone methylation machinery and involved in myogenesis. Associates with a histone methyltransferase complex that specifically mediates dimethylation and trimethylation of 'Lys-4' of histone H3. Mediates the recruitment of that complex to the transcription factors PAX3 and PAX7 on chromatin to regulate the expression of genes involved in muscle progenitor cells proliferation including ID3 and CDC20. This chain is PAX3- and PAX7-binding protein 1 (Paxbp1), found in Mus musculus (Mouse).